The sequence spans 1086 residues: Tudor domain-containing protein 7 (1086 aa).

HTH OST-type domains lie at 3-76 and 222-291; these read EADL…YAVA and KMDE…YPAR. Over residues 295-306 the composition is skewed to basic and acidic residues; sequence PLKSDQDPEKEL. A disordered region spans residues 295 to 324; sequence PLKSDQDPEKELPPPPPAPKQEVPSQGSPA. The region spanning 325–394 is the HTH OST-type 3 domain; the sequence is VMPDVKEKVA…TQKAILYAKL (70 aa). 2 Tudor domains span residues 501–558 and 691–748; these read TVHV…FCSL and LPFC…FLQE. Positions 844–866 are disordered; sequence AASSPGNRNGGTPAPGSPAESLR. The residue at position 847 (Ser-847) is a Phosphoserine. The interval 849 to 1086 is interaction with CDK17; it reads GNRNGGTPAP…QYLLELSKVN (238 aa). Residues 881–1086 are interaction with CABLES1; the sequence is TSSFSLEELP…QYLLELSKVN (206 aa).

This sequence belongs to the TDRD7 family. In terms of assembly, found in a mRNP complex, at least composed of TDRD1, TDRD6, TDRD7 and DDX4. Found in a complex containing CABLES1, CDK16 and CDK17. Interacts with CABLES1, CDK17 and PIWIL1. Mainly expressed in testis. Expressed in spermatogonia, spermatocytes and round spermatids (at protein level). Also expressed in the developing lens.

It is found in the cytoplasm. Its function is as follows. Component of specific cytoplasmic RNA granules involved in post-transcriptional regulation of specific genes: probably acts by binding to specific mRNAs and regulating their translation. Required for lens transparency during lens development, by regulating translation of genes such as CRYBB3 and HSPB1 in the developing lens. Also required during spermatogenesis. The protein is Tudor domain-containing protein 7 (Tdrd7) of Mus musculus (Mouse).